The primary structure comprises 239 residues: Ribonuclease PH (239 aa).

Phosphate contacts are provided by residues Arg86 and 124 to 126; that span reads GTR.

It belongs to the RNase PH family. As to quaternary structure, homohexameric ring arranged as a trimer of dimers.

The catalysed reaction is tRNA(n+1) + phosphate = tRNA(n) + a ribonucleoside 5'-diphosphate. Phosphorolytic 3'-5' exoribonuclease that plays an important role in tRNA 3'-end maturation. Removes nucleotide residues following the 3'-CCA terminus of tRNAs; can also add nucleotides to the ends of RNA molecules by using nucleoside diphosphates as substrates, but this may not be physiologically important. Probably plays a role in initiation of 16S rRNA degradation (leading to ribosome degradation) during starvation. The sequence is that of Ribonuclease PH from Rhizobium etli (strain CIAT 652).